A 488-amino-acid polypeptide reads, in one-letter code: MTQDVEMKEQAAPPSNSLSSTAPSIFHHLKEIASLIETGAYAREVRRISRAVRLTMALRKKLKASSLSAFLNYVLVPGSEVHSRLSSFLPKEDEQDMEVDTATSGAQAPIKNPLPELEIYCYLLVLIFLIDQKKYNEAKACSSASIARLKTVNRRTVDVLASRLYFYYSLCYELTGDLAEIRGYLLALHRIATLRHDELGQETLLNLLLRNYLHYNLYDQAEKLRSKAPRFEAHSNQQFSRYLFYLGKIRTIQLEYTDAKESLLQAARKAPQAALGFRVQCNKWAIIVRLLLGEIPERTVFMQKGMEKALRPYFELTNAVRIGDLELFRKVAEKFSSTFSSDGTNNLIVRLRHNVIRTGLRNISISYSRISLVDVAKKLRLDSPNPVADAESIVSKAIRDGAIDATLDHANGWMVSKETGDIYSTNEPQIAFNSRIAFCLNMHNEAVRALRFPPNSHKEKESAEKRRERQQQEQELAKHIAEEDDDDF.

The disordered stretch occupies residues 1-20; that stretch reads MTQDVEMKEQAAPPSNSLSS. The PCI domain occupies 240 to 421; sequence SRYLFYLGKI…GWMVSKETGD (182 aa). Residues 452–488 form a disordered region; it reads FPPNSHKEKESAEKRRERQQQEQELAKHIAEEDDDDF. Basic and acidic residues predominate over residues 456–481; it reads SHKEKESAEKRRERQQQEQELAKHIA.

Belongs to the proteasome subunit S3 family. The 26S proteasome is composed of a core protease, known as the 20S proteasome, capped at one or both ends by the 19S regulatory complex (RC). The RC is composed of at least 18 different subunits in two subcomplexes, the base and the lid, which form the portions proximal and distal to the 20S proteolytic core, respectively.

Its subcellular location is the nucleus. Functionally, acts as a regulatory subunit of the 26 proteasome which is involved in the ATP-dependent degradation of ubiquitinated proteins. The protein is Probable 26S proteasome non-ATPase regulatory subunit 3 (21D7) of Nicotiana tabacum (Common tobacco).